Consider the following 325-residue polypeptide: tRNA N6-adenosine threonylcarbamoyltransferase (325 aa).

Fe cation-binding residues include His-111 and His-115. Substrate is bound by residues 134-138 (LVSGG), Asp-167, Gly-180, Asp-184, and Asn-284. Asp-312 contacts Fe cation.

Belongs to the KAE1 / TsaD family. Fe(2+) is required as a cofactor.

It localises to the cytoplasm. It carries out the reaction L-threonylcarbamoyladenylate + adenosine(37) in tRNA = N(6)-L-threonylcarbamoyladenosine(37) in tRNA + AMP + H(+). Required for the formation of a threonylcarbamoyl group on adenosine at position 37 (t(6)A37) in tRNAs that read codons beginning with adenine. Is involved in the transfer of the threonylcarbamoyl moiety of threonylcarbamoyl-AMP (TC-AMP) to the N6 group of A37, together with TsaE and TsaB. TsaD likely plays a direct catalytic role in this reaction. The protein is tRNA N6-adenosine threonylcarbamoyltransferase of Trichodesmium erythraeum (strain IMS101).